The sequence spans 348 residues: Flagellar P-ring protein (348 aa).

A signal peptide spans 1–24; that stretch reads MRRKNNNKIWIWVATLILSISALY.

Belongs to the FlgI family. As to quaternary structure, the basal body constitutes a major portion of the flagellar organelle and consists of four rings (L,P,S, and M) mounted on a central rod.

The protein resides in the periplasm. It is found in the bacterial flagellum basal body. Functionally, assembles around the rod to form the L-ring and probably protects the motor/basal body from shearing forces during rotation. In Helicobacter hepaticus (strain ATCC 51449 / 3B1), this protein is Flagellar P-ring protein.